The following is a 299-amino-acid chain: GTPase Era (299 aa).

In terms of domain architecture, Era-type G spans 9-177; it reads RSGSVAVIGR…VGDLLKLVPE (169 aa). A G1 region spans residues 17 to 24; the sequence is GRPNVGKS. 17–24 contributes to the GTP binding site; the sequence is GRPNVGKS. Residues 43-47 are G2; the sequence is QTTRH. A G3 region spans residues 64–67; the sequence is DTPG. GTP contacts are provided by residues 64-68 and 126-129; these read DTPGL and NKVD. Residues 126–129 are G4; sequence NKVD. Residues 156–158 are G5; it reads VSA. Residues 200–284 form the KH type-2 domain; sequence VREQLMRQLG…FLETWVRVRE (85 aa).

The protein belongs to the TRAFAC class TrmE-Era-EngA-EngB-Septin-like GTPase superfamily. Era GTPase family. Monomer.

It localises to the cytoplasm. It is found in the cell inner membrane. Its function is as follows. An essential GTPase that binds both GDP and GTP, with rapid nucleotide exchange. Plays a role in 16S rRNA processing and 30S ribosomal subunit biogenesis and possibly also in cell cycle regulation and energy metabolism. The chain is GTPase Era from Xanthomonas axonopodis pv. citri (strain 306).